The chain runs to 156 residues: UPF0039 protein Mb2876c (156 aa).

In terms of domain architecture, N-acetyltransferase spans 8–150 (VWAKDLDARA…PHVPMLRPGS (143 aa)).

It belongs to the UPF0039 (ElaA) family.

This Mycobacterium bovis (strain ATCC BAA-935 / AF2122/97) protein is UPF0039 protein Mb2876c.